A 481-amino-acid chain; its full sequence is 2-succinylbenzoate--CoA ligase (481 aa).

This sequence belongs to the ATP-dependent AMP-binding enzyme family. MenE subfamily.

The catalysed reaction is 2-succinylbenzoate + ATP + CoA = 2-succinylbenzoyl-CoA + AMP + diphosphate. Its pathway is quinol/quinone metabolism; 1,4-dihydroxy-2-naphthoate biosynthesis; 1,4-dihydroxy-2-naphthoate from chorismate: step 5/7. It functions in the pathway quinol/quinone metabolism; menaquinone biosynthesis. In terms of biological role, converts 2-succinylbenzoate (OSB) to 2-succinylbenzoyl-CoA (OSB-CoA). In Bacillus cereus (strain ATCC 10987 / NRS 248), this protein is 2-succinylbenzoate--CoA ligase.